Consider the following 768-residue polypeptide: Ribosomal RNA large subunit methyltransferase K/L (768 aa).

Residues 60–175 (DLYKICLWSR…DKQAELYLDL (116 aa)) enclose the THUMP domain.

This sequence belongs to the methyltransferase superfamily. RlmKL family.

The protein localises to the cytoplasm. It catalyses the reaction guanosine(2445) in 23S rRNA + S-adenosyl-L-methionine = N(2)-methylguanosine(2445) in 23S rRNA + S-adenosyl-L-homocysteine + H(+). It carries out the reaction guanosine(2069) in 23S rRNA + S-adenosyl-L-methionine = N(2)-methylguanosine(2069) in 23S rRNA + S-adenosyl-L-homocysteine + H(+). Its function is as follows. Specifically methylates the guanine in position 2445 (m2G2445) and the guanine in position 2069 (m7G2069) of 23S rRNA. The protein is Ribosomal RNA large subunit methyltransferase K/L of Psychrobacter arcticus (strain DSM 17307 / VKM B-2377 / 273-4).